The chain runs to 375 residues: Period circadian protein (375 aa).

Disordered regions lie at residues 28–118 (TAPV…AVTP), 140–189 (KHRE…WEGE), and 220–254 (CQAS…NQYA). Residues 69–91 (SGNFTTGSNLHMSSVTNTSNAGT) show a composition bias toward low complexity. Residues 92-113 (GTSGTGNSGGGGGGGGGGGPGN) show a composition bias toward gly residues. Residues 145 to 156 (RGRSGEKNKKSA) show a composition bias toward basic and acidic residues. The segment covering 224–243 (GAGGGGSGSVGGTGNIGSGG) has biased composition (gly residues). The span at 245–254 (NAQPSTNQYA) shows a compositional bias: polar residues.

As to quaternary structure, forms a heterodimer with timeless (TIM); the complex then translocates into the nucleus. Post-translationally, phosphorylated with a circadian rhythmicity, probably by the double-time protein (dbt). Phosphorylation could be implicated in the stability of per monomer and in the formation of heterodimer per-tim.

It localises to the nucleus. The protein resides in the cytoplasm. The protein localises to the perinuclear region. Essential for biological clock functions. Determines the period length of circadian and ultradian rhythms; an increase in PER dosage leads to shortened circadian rhythms and a decrease leads to lengthened circadian rhythms. Essential for the circadian rhythmicity of locomotor activity, eclosion behavior, and for the rhythmic component of the male courtship song that originates in the thoracic nervous system. The biological cycle depends on the rhythmic formation and nuclear localization of the TIM-PER complex. Light induces the degradation of TIM, which promotes elimination of PER. Nuclear activity of the heterodimer coordinatively regulates PER and TIM transcription through a negative feedback loop. Behaves as a negative element in circadian transcriptional loop. Does not appear to bind DNA, suggesting indirect transcriptional inhibition. The sequence is that of Period circadian protein (per) from Drosophila capricorni (Fruit fly).